A 1399-amino-acid chain; its full sequence is DNA-directed RNA polymerase subunit beta' (1399 aa).

4 residues coordinate Zn(2+): C71, C73, C86, and C89. Positions 462, 464, and 466 each coordinate Mg(2+). C810, C884, C891, and C894 together coordinate Zn(2+).

Belongs to the RNA polymerase beta' chain family. The RNAP catalytic core consists of 2 alpha, 1 beta, 1 beta' and 1 omega subunit. When a sigma factor is associated with the core the holoenzyme is formed, which can initiate transcription. It depends on Mg(2+) as a cofactor. Zn(2+) serves as cofactor.

The catalysed reaction is RNA(n) + a ribonucleoside 5'-triphosphate = RNA(n+1) + diphosphate. Its function is as follows. DNA-dependent RNA polymerase catalyzes the transcription of DNA into RNA using the four ribonucleoside triphosphates as substrates. This is DNA-directed RNA polymerase subunit beta' from Chelativorans sp. (strain BNC1).